A 255-amino-acid polypeptide reads, in one-letter code: RNA polymerase sigma-F factor (255 aa).

Residues 61-74 carry the Polymerase core binding motif; it reads DLFQIGCIGLLKSV. Residues 221–240 constitute a DNA-binding region (H-T-H motif); that stretch reads QSEVADRLGISQVQVSRLEK.

The protein belongs to the sigma-70 factor family.

Sigma factors are initiation factors that promote the attachment of RNA polymerase to specific initiation sites and are then released. This sigma factor is responsible for the expression of sporulation specific genes. The chain is RNA polymerase sigma-F factor (sigF) from Bacillus licheniformis.